The chain runs to 142 residues: Peptide methionine sulfoxide reductase MsrB (142 aa).

The region spanning 3–126 is the MsrB domain; it reads KEELKKKLSP…NSAALRFIPF (124 aa). Residue Cys-115 is the Nucleophile of the active site.

Belongs to the MsrB Met sulfoxide reductase family.

The enzyme catalyses L-methionyl-[protein] + [thioredoxin]-disulfide + H2O = L-methionyl-(R)-S-oxide-[protein] + [thioredoxin]-dithiol. The sequence is that of Peptide methionine sulfoxide reductase MsrB from Lactococcus lactis subsp. cremoris (strain MG1363).